We begin with the raw amino-acid sequence, 501 residues long: Growth/differentiation factor 5 (501 aa).

An N-terminal signal peptide occupies residues 1-27; sequence MRLPKLLTFLLWYLAWLDLEFICTVLG. Residues 28–381 constitute a propeptide that is removed on maturation; sequence APDLGQRPQG…YLFSQRRKRR (354 aa). The interval 29–169 is disordered; the sequence is PDLGQRPQGT…EPFRPPPITP (141 aa). Residues 99–111 show a composition bias toward pro residues; it reads PRPGGPEPKPGHP. The segment covering 148–162 has biased composition (basic and acidic residues); the sequence is KAREPGPPREPKEPF. N-linked (GlcNAc...) asparagine glycosylation occurs at N189. The interval 246–265 is disordered; it reads PSDTAKPAAPGGGRAAQLKL. Cystine bridges form between C400–C466, C429–C498, and C433–C500.

Belongs to the TGF-beta family. As to quaternary structure, homodimer; disulfide-linked. Interacts with serine proteases, HTRA1 and HTRA3. Following LPS binding, may form a complex with CXCR4, HSP90AA1 and HSPA8. Interacts with high affinity with NOG; inhibits chondrogenesis. Interacts with high affinity with BMPR1B and lower affinity with BMPR1A; positively regulates chondrocyte differentiation and induces SMAD dependent signaling. Interacts with FBN1 (via N-terminal domain) and FBN2. Interacts with TGFBR3. As to expression, predominantly expressed in long bones during embryonic development. Expressed in monocytes (at protein level).

It localises to the secreted. The protein resides in the cell membrane. Growth factor involved in bone and cartilage formation. During cartilage development regulates differentiation of chondrogenic tissue through two pathways. Firstly, positively regulates differentiation of chondrogenic tissue through its binding of high affinity with BMPR1B and of less affinity with BMPR1A, leading to induction of SMAD1-SMAD5-SMAD8 complex phosphorylation and then SMAD protein signaling transduction. Secondly, negatively regulates chondrogenic differentiation through its interaction with NOG. Required to prevent excessive muscle loss upon denervation. This function requires SMAD4 and is mediated by phosphorylated SMAD1/5/8. Binds bacterial lipopolysaccharide (LPS) and mediates LPS-induced inflammatory response, including TNF secretion by monocytes. In Homo sapiens (Human), this protein is Growth/differentiation factor 5 (GDF5).